Reading from the N-terminus, the 245-residue chain is Ribonuclease P protein component 3 (245 aa).

The protein belongs to the eukaryotic/archaeal RNase P protein component 3 family. As to quaternary structure, consists of a catalytic RNA component and at least 4-5 protein subunits.

It localises to the cytoplasm. The enzyme catalyses Endonucleolytic cleavage of RNA, removing 5'-extranucleotides from tRNA precursor.. Part of ribonuclease P, a protein complex that generates mature tRNA molecules by cleaving their 5'-ends. The sequence is that of Ribonuclease P protein component 3 from Methanothermobacter thermautotrophicus (strain ATCC 29096 / DSM 1053 / JCM 10044 / NBRC 100330 / Delta H) (Methanobacterium thermoautotrophicum).